Reading from the N-terminus, the 492-residue chain is Octanoyltransferase (492 aa).

Residues 1–255 (MRCILLGSGT…GYDGLEAIID (255 aa)) are unknown. The tract at residues 256 to 492 (EKGIRIKDFE…AVFRRNFGAL (237 aa)) is lipB domain. Residues 305–492 (RKPQNTLLFC…AVFRRNFGAL (188 aa)) form the BPL/LPL catalytic domain. Residues 350-357 (RGGDITYH), 423-425 (AIG), and 436-438 (GFA) contribute to the substrate site. Cysteine 454 serves as the catalytic Acyl-thioester intermediate.

The protein in the C-terminal section; belongs to the LipB family.

The protein localises to the cytoplasm. It carries out the reaction octanoyl-[ACP] + L-lysyl-[protein] = N(6)-octanoyl-L-lysyl-[protein] + holo-[ACP] + H(+). The protein operates within protein modification; protein lipoylation via endogenous pathway; protein N(6)-(lipoyl)lysine from octanoyl-[acyl-carrier-protein]: step 1/2. Catalyzes the transfer of endogenously produced octanoic acid from octanoyl-acyl-carrier-protein onto the lipoyl domains of lipoate-dependent enzymes. Lipoyl-ACP can also act as a substrate although octanoyl-ACP is likely to be the physiological substrate. The polypeptide is Octanoyltransferase (Porphyromonas gingivalis (strain ATCC BAA-308 / W83)).